We begin with the raw amino-acid sequence, 369 residues long: Biotin synthase (369 aa).

In terms of domain architecture, Radical SAM core spans 51 to 269; the sequence is NYVQVSTLLS…IAVARIMMPK (219 aa). Positions 66, 70, and 73 each coordinate [4Fe-4S] cluster. Cys-110, Cys-141, Cys-201, and Arg-273 together coordinate [2Fe-2S] cluster.

Belongs to the radical SAM superfamily. Biotin synthase family. Homodimer. It depends on [4Fe-4S] cluster as a cofactor. [2Fe-2S] cluster serves as cofactor.

It carries out the reaction (4R,5S)-dethiobiotin + (sulfur carrier)-SH + 2 reduced [2Fe-2S]-[ferredoxin] + 2 S-adenosyl-L-methionine = (sulfur carrier)-H + biotin + 2 5'-deoxyadenosine + 2 L-methionine + 2 oxidized [2Fe-2S]-[ferredoxin]. It functions in the pathway cofactor biosynthesis; biotin biosynthesis; biotin from 7,8-diaminononanoate: step 2/2. In terms of biological role, catalyzes the conversion of dethiobiotin (DTB) to biotin by the insertion of a sulfur atom into dethiobiotin via a radical-based mechanism. The polypeptide is Biotin synthase (Pseudoalteromonas atlantica (strain T6c / ATCC BAA-1087)).